A 330-amino-acid chain; its full sequence is Aspartate--ammonia ligase (330 aa).

It belongs to the class-II aminoacyl-tRNA synthetase family. AsnA subfamily.

It localises to the cytoplasm. It carries out the reaction L-aspartate + NH4(+) + ATP = L-asparagine + AMP + diphosphate + H(+). It functions in the pathway amino-acid biosynthesis; L-asparagine biosynthesis; L-asparagine from L-aspartate (ammonia route): step 1/1. This chain is Aspartate--ammonia ligase, found in Haemophilus influenzae (strain ATCC 51907 / DSM 11121 / KW20 / Rd).